The chain runs to 335 residues: Eukaryotic translation initiation factor 3 subunit I (335 aa).

WD repeat units follow at residues 8–47, 50–91, 145–184, 189–228, and 286–325; these read GHER…RLGT, GHQG…KTWD, CAES…LLFN, EPDL…VMKT, and GHFG…FDFT.

The protein belongs to the eIF-3 subunit I family. In terms of assembly, component of the eukaryotic translation initiation factor 3 (eIF-3) complex.

Its subcellular location is the cytoplasm. Component of the eukaryotic translation initiation factor 3 (eIF-3) complex, which is involved in protein synthesis of a specialized repertoire of mRNAs and, together with other initiation factors, stimulates binding of mRNA and methionyl-tRNAi to the 40S ribosome. The eIF-3 complex specifically targets and initiates translation of a subset of mRNAs involved in cell proliferation. This chain is Eukaryotic translation initiation factor 3 subunit I (tif34), found in Botryotinia fuckeliana (strain B05.10) (Noble rot fungus).